Consider the following 555-residue polypeptide: Protein FAM234A (555 aa).

The segment covering 1 to 22 has biased composition (basic and acidic residues); sequence MMDNKDLEAEIHPLKNEDKKSQ. The tract at residues 1 to 40 is disordered; it reads MMDNKDLEAEIHPLKNEDKKSQENPGNLPRNEDNLKSKPV. Residues 1-49 are Cytoplasmic-facing; the sequence is MMDNKDLEAEIHPLKNEDKKSQENPGNLPRNEDNLKSKPVPSRLSRCRT. At Ser21 the chain carries Phosphoserine. The helical; Signal-anchor for type II membrane protein transmembrane segment at 50–70 threads the bilayer; it reads VAFFLSLFTCLFVVFVLSFII. Residues 71–555 are Extracellular-facing; that stretch reads PCPDRPSSQG…FSRLRYRSEM (485 aa). Asn116, Asn120, Asn317, Asn392, and Asn476 each carry an N-linked (GlcNAc...) asparagine glycan.

Belongs to the FAM234 family.

The protein resides in the membrane. In Mus musculus (Mouse), this protein is Protein FAM234A.